Reading from the N-terminus, the 127-residue chain is Oleate-induced peroxisomal protein POX18 (127 aa).

The region spanning 14-119 is the SCP2 domain; that stretch reads FKELHEGLAD…KATAIESVFK (106 aa). The interval 33 to 41 is hydrophobic; sequence AVNAVIVIT. The segment at 43–52 is hydrophilic; that stretch reads KNKEGKEQSW.

Monomer.

It is found in the peroxisome. It participates in lipid metabolism; fatty acid metabolism. Is involved in beta-oxidation of long-chain fatty acids. Its exact function is unknown, but possesses a nonspecific lipid-transfer activity, despite the absence of a cysteine residue thought to be essential for the activity of its mammalian counterparts. In Candida maltosa (Yeast), this protein is Oleate-induced peroxisomal protein POX18 (POX18).